Consider the following 947-residue polypeptide: Bifunctional glutamine synthetase adenylyltransferase/adenylyl-removing enzyme (947 aa).

The tract at residues 1 to 440 is adenylyl removase; the sequence is MTPLSSPLSQ…VFNELIGDDE (440 aa). The interval 450-947 is adenylyl transferase; the sequence is SEPWREVWQD…ASWRKWLVAV (498 aa).

The protein belongs to the GlnE family. Mg(2+) is required as a cofactor.

It catalyses the reaction [glutamine synthetase]-O(4)-(5'-adenylyl)-L-tyrosine + phosphate = [glutamine synthetase]-L-tyrosine + ADP. The enzyme catalyses [glutamine synthetase]-L-tyrosine + ATP = [glutamine synthetase]-O(4)-(5'-adenylyl)-L-tyrosine + diphosphate. Its function is as follows. Involved in the regulation of glutamine synthetase GlnA, a key enzyme in the process to assimilate ammonia. When cellular nitrogen levels are high, the C-terminal adenylyl transferase (AT) inactivates GlnA by covalent transfer of an adenylyl group from ATP to specific tyrosine residue of GlnA, thus reducing its activity. Conversely, when nitrogen levels are low, the N-terminal adenylyl removase (AR) activates GlnA by removing the adenylyl group by phosphorolysis, increasing its activity. The regulatory region of GlnE binds the signal transduction protein PII (GlnB) which indicates the nitrogen status of the cell. The chain is Bifunctional glutamine synthetase adenylyltransferase/adenylyl-removing enzyme from Salmonella agona (strain SL483).